The chain runs to 401 residues: Dynactin subunit 2 (401 aa).

The disordered stretch occupies residues 1 to 25 (MADPKYADLPGIARNEPDVYETSDL). Alanine 2 carries the post-translational modification N-acetylalanine. At tyrosine 6 the chain carries Phosphotyrosine. Serine 83 carries the post-translational modification Phosphoserine. A Phosphotyrosine modification is found at tyrosine 86. Residues 99-132 (PQQKYQRLLHEVQELTTEVEKIKTTVKESATEEK) adopt a coiled-coil conformation. 2 positions are modified to phosphothreonine: threonine 134 and threonine 198. A coiled-coil region spans residues 214-244 (EQDKFSQAAKVAELEKRLTELETAVRCDQDA). Serine 320 is subject to Phosphoserine. The stretch at 379 to 399 (RENLATVEGNFASIDERMKKL) forms a coiled coil.

Belongs to the dynactin subunit 2 family. In terms of assembly, subunit of dynactin, a multiprotein complex part of a tripartite complex with dynein and a adapter, such as BICDL1, BICD2 or HOOK3. The dynactin complex is built around ACTR1A/ACTB filament and consists of an actin-related filament composed of a shoulder domain, a pointed end and a barbed end. Its length is defined by its flexible shoulder domain. The soulder is composed of 2 DCTN1 subunits, 4 DCTN2 and 2 DCTN3. The 4 DCNT2 (via N-terminus) bind the ACTR1A filament and act as molecular rulers to determine the length. The pointed end is important for binding dynein-dynactin cargo adapters and consists of 4 subunits: ACTR10, DCNT4, DCTN5 and DCTN6. The barbed end is composed of a CAPZA1:CAPZB heterodimers, which binds ACTR1A/ACTB filament and dynactin and stabilizes dynactin. Interacts with BICD2 and CEP135. Interacts with DYNAP. Interacts with ECPAS. Interacts with MAPRE1.

Its subcellular location is the cytoplasm. It is found in the cytoskeleton. The protein resides in the microtubule organizing center. The protein localises to the centrosome. It localises to the membrane. In terms of biological role, part of the dynactin complex that activates the molecular motor dynein for ultra-processive transport along microtubules. In the dynactin soulder domain, binds the ACTR1A filament and acts as a molecular ruler to determine the length. Modulates cytoplasmic dynein binding to an organelle, and plays a role in prometaphase chromosome alignment and spindle organization during mitosis. Involved in anchoring microtubules to centrosomes. May play a role in synapse formation during brain development. The polypeptide is Dynactin subunit 2 (Homo sapiens (Human)).